A 425-amino-acid chain; its full sequence is Serine--tRNA ligase (425 aa).

231–233 (TAE) contacts L-serine. Residue 262–264 (RSE) participates in ATP binding. An L-serine-binding site is contributed by glutamate 285. An ATP-binding site is contributed by 349 to 352 (EISS). Residue serine 385 coordinates L-serine.

The protein belongs to the class-II aminoacyl-tRNA synthetase family. Type-1 seryl-tRNA synthetase subfamily. As to quaternary structure, homodimer. The tRNA molecule binds across the dimer.

The protein resides in the cytoplasm. It catalyses the reaction tRNA(Ser) + L-serine + ATP = L-seryl-tRNA(Ser) + AMP + diphosphate + H(+). The catalysed reaction is tRNA(Sec) + L-serine + ATP = L-seryl-tRNA(Sec) + AMP + diphosphate + H(+). It functions in the pathway aminoacyl-tRNA biosynthesis; selenocysteinyl-tRNA(Sec) biosynthesis; L-seryl-tRNA(Sec) from L-serine and tRNA(Sec): step 1/1. Its function is as follows. Catalyzes the attachment of serine to tRNA(Ser). Is also able to aminoacylate tRNA(Sec) with serine, to form the misacylated tRNA L-seryl-tRNA(Sec), which will be further converted into selenocysteinyl-tRNA(Sec). The polypeptide is Serine--tRNA ligase (Bacillus licheniformis (strain ATCC 14580 / DSM 13 / JCM 2505 / CCUG 7422 / NBRC 12200 / NCIMB 9375 / NCTC 10341 / NRRL NRS-1264 / Gibson 46)).